The chain runs to 164 residues: Photosystem II extrinsic protein V (164 aa).

Residues 1–27 (MALKSKFLVGSILATFILNGFSSPAQA) form the signal peptide. Cys64, Cys67, His68, and His119 together coordinate heme c.

The protein belongs to the cytochrome c family. PsbV subfamily. As to quaternary structure, PSII is composed of 1 copy each of membrane proteins PsbA, PsbB, PsbC, PsbD, PsbE, PsbF, PsbH, PsbI, PsbJ, PsbK, PsbL, PsbM, PsbT, PsbY, PsbZ, Psb30/Ycf12, at least 3 peripheral proteins of the oxygen-evolving complex and a large number of cofactors. It forms dimeric complexes. Heme c is required as a cofactor.

It localises to the plastid. Its subcellular location is the chloroplast thylakoid membrane. In terms of biological role, one of the extrinsic, lumenal subunits of photosystem II (PSII). PSII is a light-driven water plastoquinone oxidoreductase, using light energy to abstract electrons from H(2)O, generating a proton gradient subsequently used for ATP formation. The extrinsic proteins stabilize the structure of photosystem II oxygen-evolving complex (OEC), the ion environment of oxygen evolution and protect the OEC against heat-induced inactivation. The polypeptide is Photosystem II extrinsic protein V (Emiliania huxleyi (Coccolithophore)).